The chain runs to 383 residues: Flagellum-associated coiled-coil domain-containing protein 1 (383 aa).

The disordered stretch occupies residues 26-79 (PYPLPKHPTGKFKPVLPPPISKEHNSLLSQPGKSTVSPRDKVQSGNTESSKAPS). Residues 51–77 (SLLSQPGKSTVSPRDKVQSGNTESSKA) show a composition bias toward polar residues. Coiled coils occupy residues 125-220 (TDII…YLKS) and 276-359 (KKMN…FQTK). Residue lysine 354 is modified to N6-acetyllysine.

Isoform 1 is specific to germ cells of the testis and localizes to the principal piece of the sperm flagellum. Isoform 2 seems to be expressed mainly in somatic cells of the testis, and is not detected in mature spermatozoa (at protein level). Isoform 2 may also be expressed weakly in brain.

The protein resides in the cytoplasm. It is found in the cytoplasmic granule. The protein localises to the cell projection. Its subcellular location is the cilium. It localises to the flagellum. The polypeptide is Flagellum-associated coiled-coil domain-containing protein 1 (Mus musculus (Mouse)).